The sequence spans 470 residues: Aspartyl aminopeptidase (470 aa).

H92 is a binding site for Zn(2+). H166 serves as a coordination point for substrate. D263 contacts Zn(2+). Residue E299 participates in substrate binding. Positions 300 and 343 each coordinate Zn(2+). Substrate contacts are provided by D343, H346, K371, and Y378. H437 is a binding site for Zn(2+).

Belongs to the peptidase M18 family. In terms of assembly, tetrahedron-shaped homododecamer built from six homodimers. Zn(2+) is required as a cofactor. Expressed in various cell types and tissues including the pharynx, neurons, body wall muscle, intestine and vulva.

The protein resides in the cytoplasm. Its subcellular location is the cytosol. It catalyses the reaction Release of an N-terminal aspartate or glutamate from a peptide, with a preference for aspartate.. In terms of biological role, aminopeptidase with specificity towards an acidic amino acid at the N-terminus. Plays a role in membrane trafficking and is specifically involved in the recycling and degradation of endocytic cargo. This chain is Aspartyl aminopeptidase, found in Caenorhabditis elegans.